Consider the following 432-residue polypeptide: Adenylosuccinate synthetase (432 aa).

GTP is bound by residues 13–19 (GDEGKGK) and 41–43 (GHT). Aspartate 14 functions as the Proton acceptor in the catalytic mechanism. Mg(2+) is bound by residues aspartate 14 and glycine 41. Residues 14-17 (DEGK), 39-42 (NAGH), threonine 130, arginine 144, glutamine 225, threonine 240, and arginine 304 contribute to the IMP site. The Proton donor role is filled by histidine 42. Position 300-306 (300-306 (ATTGRKR)) interacts with substrate. Residues arginine 306, 332–334 (KLD), and 415–417 (STG) contribute to the GTP site.

It belongs to the adenylosuccinate synthetase family. In terms of assembly, homodimer. Requires Mg(2+) as cofactor.

It localises to the cytoplasm. It carries out the reaction IMP + L-aspartate + GTP = N(6)-(1,2-dicarboxyethyl)-AMP + GDP + phosphate + 2 H(+). It functions in the pathway purine metabolism; AMP biosynthesis via de novo pathway; AMP from IMP: step 1/2. Plays an important role in the de novo pathway of purine nucleotide biosynthesis. Catalyzes the first committed step in the biosynthesis of AMP from IMP. The sequence is that of Adenylosuccinate synthetase from Vibrio cholerae serotype O1 (strain M66-2).